The following is a 207-amino-acid chain: Cytochrome c biogenesis ATP-binding export protein CcmA (207 aa).

In terms of domain architecture, ABC transporter spans 3–206; it reads LMAEGLSARR…AKSLEMTGFV (204 aa). 35–42 serves as a coordination point for ATP; the sequence is GPNGAGKS.

It belongs to the ABC transporter superfamily. CcmA exporter (TC 3.A.1.107) family. As to quaternary structure, the complex is composed of two ATP-binding proteins (CcmA) and two transmembrane proteins (CcmB).

The protein resides in the cell inner membrane. It carries out the reaction heme b(in) + ATP + H2O = heme b(out) + ADP + phosphate + H(+). In terms of biological role, part of the ABC transporter complex CcmAB involved in the biogenesis of c-type cytochromes; once thought to export heme, this seems not to be the case, but its exact role is uncertain. Responsible for energy coupling to the transport system. The protein is Cytochrome c biogenesis ATP-binding export protein CcmA of Rhizobium meliloti (strain 1021) (Ensifer meliloti).